The chain runs to 512 residues: tRNA-2-methylthio-N(6)-dimethylallyladenosine synthase (512 aa).

The interval 1 to 22 (MVAHDAAAGVTGEGAGPPVRRA) is disordered. The 117-residue stretch at 25–141 (RTYQVRTYGC…LPTLLERARH (117 aa)) folds into the MTTase N-terminal domain. [4Fe-4S] cluster is bound by residues cysteine 34, cysteine 70, cysteine 104, cysteine 178, cysteine 182, and cysteine 185. One can recognise a Radical SAM core domain in the interval 164–400 (RESAYAAWVS…IALQEQISLE (237 aa)). Positions 403–471 (RALVGQAVEV…PHHLIADAGV (69 aa)) constitute a TRAM domain.

This sequence belongs to the methylthiotransferase family. MiaB subfamily. Monomer. Requires [4Fe-4S] cluster as cofactor.

The protein resides in the cytoplasm. The catalysed reaction is N(6)-dimethylallyladenosine(37) in tRNA + (sulfur carrier)-SH + AH2 + 2 S-adenosyl-L-methionine = 2-methylsulfanyl-N(6)-dimethylallyladenosine(37) in tRNA + (sulfur carrier)-H + 5'-deoxyadenosine + L-methionine + A + S-adenosyl-L-homocysteine + 2 H(+). Its function is as follows. Catalyzes the methylthiolation of N6-(dimethylallyl)adenosine (i(6)A), leading to the formation of 2-methylthio-N6-(dimethylallyl)adenosine (ms(2)i(6)A) at position 37 in tRNAs that read codons beginning with uridine. This chain is tRNA-2-methylthio-N(6)-dimethylallyladenosine synthase, found in Mycobacterium bovis (strain ATCC BAA-935 / AF2122/97).